Here is a 667-residue protein sequence, read N- to C-terminus: Receptor for retinol uptake STRA6 (667 aa).

Residues 1–13 (MSSQPAGNQTSPG) are compositionally biased toward polar residues. The interval 1–22 (MSSQPAGNQTSPGPTEDYSYGS) is disordered. Residues 1–50 (MSSQPAGNQTSPGPTEDYSYGSWYIDEPQGGEELQPEGEVPSCHTSIPPS) are Extracellular-facing. Asn8 is a glycosylation site (N-linked (GlcNAc...) asparagine). Residues 51-71 (LYHACLASLSILVLLLLAMLV) traverse the membrane as a helical segment. Residues 72–98 (RRRQLWPDCVRGRPGLPSPVDFLAGDR) are Cytoplasmic-facing. A helical transmembrane segment spans residues 99–119 (PQAVPAAVFVVLFSSLCLLLP). Over 120–144 (DEDPLPFLTLASAPSQDGKTEAPRG) the chain is Extracellular. The helical transmembrane segment at 145–165 (AWKILGLFYYAALCYPLAACA) threads the bilayer. Topologically, residues 166-168 (TAG) are cytoplasmic. A helical membrane pass occupies residues 169–189 (HTAAHLLGSTLSWAHLGVQVW). Residues 190–205 (QRAECPQVPKIYKYYS) lie on the Extracellular side of the membrane. The helical transmembrane segment at 206–226 (LLASLPLLLGLGFLSLWYPVQ) threads the bilayer. Over 227-295 (LVRSFSCRTG…PQPGFRLPLK (69 aa)) the chain is Cytoplasmic. The tract at residues 235-293 (TGAGSKGLQSSYSEEYLRNLLCRKKLGSSSHTSKHGFLSWAWVCLRHCIYTPQPGFRLP) is interaction with RBP1. The chain crosses the membrane as a helical span at residues 296–316 (LVLSATLTGTAIYQVALLLLV). Over 317 to 367 (GMVPNIQKVRAGVTTDVSYLLAGFGIVLSEDKQEVVELVKHHLWALEVCYI) the chain is Extracellular. Residues 368 to 388 (SALVLSCSLTFLVLMRSLVTH) traverse the membrane as a helical segment. Over 389–422 (RTNLRALHRGAALDSSPLHRSPHPSRRAIFCWMS) the chain is Cytoplasmic. A helical transmembrane segment spans residues 423 to 443 (FSAYQTAFICLGLLVQQIIFF). Residues 444 to 473 (LGTTALAFLVLMPVLHGRNLLLFRSLESSW) lie on the Extracellular side of the membrane. The chain crosses the membrane as a helical span at residues 474–494 (PFWLTLALAVILQSMAAHWVF). Residues 495–509 (LETHDGHPQLTNRRV) lie on the Cytoplasmic side of the membrane. An intramembrane region (helical) is located at residues 510 to 547 (LYAATFLLFPLNVLVGAMVATWRVLLSALYNAIHLGQM). The Cytoplasmic portion of the chain corresponds to 548–667 (DLSLLPPRAA…ALLGANGAQP (120 aa)). Residue Tyr643 is modified to Phosphotyrosine.

Homodimer. Interacts with JAK2 and STAT5. Interacts (via extracellular domains) with RBP4. Interacts (via cytoplasmic domains) with RBP1. Phosphorylated on tyrosine residues in response to RBP4 binding. Phosphorylation requires the presence of LRAT, suggesting it may be triggered by the uptake of retinol that is then metabolized within the cell to retinoids that function as signaling molecules.

It localises to the cell membrane. Functions as a retinol transporter. Accepts all-trans retinol from the extracellular retinol-binding protein RBP4, facilitates retinol transport across the cell membrane, and then transfers retinol to the cytoplasmic retinol-binding protein RBP1. Retinol uptake is enhanced by LRAT, an enzyme that converts retinol to all-trans retinyl esters, the storage forms of vitamin A. Contributes to the activation of a signaling cascade that depends on retinol transport and LRAT-dependent generation of retinol metabolites that then trigger activation of JAK2 and its target STAT5, and ultimately increase the expression of SOCS3 and inhibit cellular responses to insulin. Important for the homeostasis of vitamin A and its derivatives, such as retinoic acid. STRA6-mediated transport is particularly important in the eye, and under conditions of dietary vitamin A deficiency. Does not transport retinoic acid. The chain is Receptor for retinol uptake STRA6 (STRA6) from Pongo abelii (Sumatran orangutan).